The chain runs to 394 residues: G2/mitotic-specific cyclin-B2 (394 aa).

The protein belongs to the cyclin family. Cyclin AB subfamily. Interacts with the CDK1 protein kinase to form a serine/threonine kinase holoenzyme complex also known as maturation promoting factor (MPF). The cyclin subunit imparts substrate specificity to the complex.

Essential for the control of the cell cycle at the G2/M (mitosis) transition. This Anguilla japonica (Japanese eel) protein is G2/mitotic-specific cyclin-B2 (ccnb2).